A 123-amino-acid chain; its full sequence is MAVKKMVEAVFVVGLVVTMMNVWGAVPVEGAISCNQVVSAMTPCATYLIGNAATPAATCCPSIRGLDSQVKATPDRQAVCNCLKTQAKSYGVKLGKAANLPGLCKVTDLNVPISPNVDCSKVH.

Positions 1-25 are cleaved as a signal peptide; sequence MAVKKMVEAVFVVGLVVTMMNVWGA. 4 disulfides stabilise this stretch: cysteine 34–cysteine 82, cysteine 44–cysteine 59, cysteine 60–cysteine 104, and cysteine 80–cysteine 119.

It belongs to the plant LTP family.

In terms of biological role, plant non-specific lipid-transfer proteins transfer phospholipids as well as galactolipids across membranes. May play a role in wax or cutin deposition in the cell walls of expanding epidermal cells and certain secretory tissues. This is Non-specific lipid-transfer protein from Pinus taeda (Loblolly pine).